A 400-amino-acid polypeptide reads, in one-letter code: Enoyl-[acyl-carrier-protein] reductase [NADH] (400 aa).

NAD(+) is bound by residues 48-53, 74-75, 111-112, and 139-140; these read GSSSGY, FE, DA, and LA. Tyr-225 contacts substrate. Catalysis depends on Tyr-235, which acts as the Proton donor. NAD(+) contacts are provided by residues Lys-244 and 273–275; that span reads VVT.

Belongs to the TER reductase family. In terms of assembly, monomer.

It catalyses the reaction a 2,3-saturated acyl-[ACP] + NAD(+) = a (2E)-enoyl-[ACP] + NADH + H(+). Its pathway is lipid metabolism; fatty acid biosynthesis. In terms of biological role, involved in the final reduction of the elongation cycle of fatty acid synthesis (FAS II). Catalyzes the reduction of a carbon-carbon double bond in an enoyl moiety that is covalently linked to an acyl carrier protein (ACP). The chain is Enoyl-[acyl-carrier-protein] reductase [NADH] from Aliivibrio fischeri (strain MJ11) (Vibrio fischeri).